The sequence spans 443 residues: Thymidine phosphorylase (443 aa).

It belongs to the thymidine/pyrimidine-nucleoside phosphorylase family. As to quaternary structure, homodimer.

The catalysed reaction is thymidine + phosphate = 2-deoxy-alpha-D-ribose 1-phosphate + thymine. It functions in the pathway pyrimidine metabolism; dTMP biosynthesis via salvage pathway; dTMP from thymine: step 1/2. In terms of biological role, the enzymes which catalyze the reversible phosphorolysis of pyrimidine nucleosides are involved in the degradation of these compounds and in their utilization as carbon and energy sources, or in the rescue of pyrimidine bases for nucleotide synthesis. The chain is Thymidine phosphorylase from Aliivibrio fischeri (strain ATCC 700601 / ES114) (Vibrio fischeri).